The following is a 291-amino-acid chain: Elongation factor Ts (291 aa).

The interval 79–82 (TDFV) is involved in Mg(2+) ion dislocation from EF-Tu.

This sequence belongs to the EF-Ts family.

It is found in the cytoplasm. Associates with the EF-Tu.GDP complex and induces the exchange of GDP to GTP. It remains bound to the aminoacyl-tRNA.EF-Tu.GTP complex up to the GTP hydrolysis stage on the ribosome. This chain is Elongation factor Ts, found in Ruegeria sp. (strain TM1040) (Silicibacter sp.).